The sequence spans 620 residues: Chaperone protein HtpG (620 aa).

The interval 1-334 is a; substrate-binding; the sequence is MTTTDTAPQT…SEDLPLNLSR (334 aa). The interval 335–548 is b; the sequence is EMLQNNPQLV…GQGPDRALER (214 aa). The c stretch occupies residues 549 to 620; it reads MLAQQNRGGA…RINRLVLRAL (72 aa).

This sequence belongs to the heat shock protein 90 family. Homodimer.

The protein localises to the cytoplasm. In terms of biological role, molecular chaperone. Has ATPase activity. The chain is Chaperone protein HtpG from Rhodopseudomonas palustris (strain BisA53).